A 549-amino-acid chain; its full sequence is Oxygen-dependent choline dehydrogenase (549 aa).

4–33 (DYVIVGSGSAGSAIAYRLSEDGRYSVIVIE) is a binding site for FAD. The active-site Proton acceptor is the H465. Residues 528 to 549 (KTPLPRSNQEPWVNPRAAVSDR) are disordered.

This sequence belongs to the GMC oxidoreductase family. The cofactor is FAD.

It carries out the reaction choline + A = betaine aldehyde + AH2. The enzyme catalyses betaine aldehyde + NAD(+) + H2O = glycine betaine + NADH + 2 H(+). Its pathway is amine and polyamine biosynthesis; betaine biosynthesis via choline pathway; betaine aldehyde from choline (cytochrome c reductase route): step 1/1. In terms of biological role, involved in the biosynthesis of the osmoprotectant glycine betaine. Catalyzes the oxidation of choline to betaine aldehyde and betaine aldehyde to glycine betaine at the same rate. The sequence is that of Oxygen-dependent choline dehydrogenase from Agrobacterium fabrum (strain C58 / ATCC 33970) (Agrobacterium tumefaciens (strain C58)).